The primary structure comprises 100 residues: MLRYNFRYLHNVLSHTVVFCFTEVSLHIVKQLGVESYACTVHASRFQKSYSASIDYCQRFLFSSNLKHNYVNLNIIFTSCIFRSLREFLRFYIAAIMCFL.

It localises to the cytoplasm. Its subcellular location is the endoplasmic reticulum. This is an uncharacterized protein from Schizosaccharomyces pombe (strain 972 / ATCC 24843) (Fission yeast).